The chain runs to 358 residues: Protein RecA (358 aa).

76-83 (GPESSGKT) is an ATP binding site.

The protein belongs to the RecA family.

The protein localises to the cytoplasm. In terms of biological role, can catalyze the hydrolysis of ATP in the presence of single-stranded DNA, the ATP-dependent uptake of single-stranded DNA by duplex DNA, and the ATP-dependent hybridization of homologous single-stranded DNAs. It interacts with LexA causing its activation and leading to its autocatalytic cleavage. The chain is Protein RecA from Rhodospirillum centenum (strain ATCC 51521 / SW).